Consider the following 279-residue polypeptide: 3-methyl-2-oxobutanoate hydroxymethyltransferase (279 aa).

Mg(2+) contacts are provided by Asp-43 and Asp-82. Residues 43–44 (DS), Asp-82, and Lys-112 each bind 3-methyl-2-oxobutanoate. Glu-114 is a binding site for Mg(2+). Residue Glu-181 is the Proton acceptor of the active site.

It belongs to the PanB family. Homodecamer; pentamer of dimers. It depends on Mg(2+) as a cofactor.

Its subcellular location is the cytoplasm. The enzyme catalyses 3-methyl-2-oxobutanoate + (6R)-5,10-methylene-5,6,7,8-tetrahydrofolate + H2O = 2-dehydropantoate + (6S)-5,6,7,8-tetrahydrofolate. The protein operates within cofactor biosynthesis; (R)-pantothenate biosynthesis; (R)-pantoate from 3-methyl-2-oxobutanoate: step 1/2. Functionally, catalyzes the reversible reaction in which hydroxymethyl group from 5,10-methylenetetrahydrofolate is transferred onto alpha-ketoisovalerate to form ketopantoate. This Halalkalibacterium halodurans (strain ATCC BAA-125 / DSM 18197 / FERM 7344 / JCM 9153 / C-125) (Bacillus halodurans) protein is 3-methyl-2-oxobutanoate hydroxymethyltransferase.